We begin with the raw amino-acid sequence, 521 residues long: DNA damage-binding protein cmr1 (521 aa).

Residues 36 to 75 (DKIIPKPAPPKPKRASTPRVKREPVKKEAARPTRQSSRLA) are disordered. A compositionally biased stretch (basic and acidic residues) spans 55–66 (VKREPVKKEAAR). 5 WD repeats span residues 183 to 224 (IVPQ…PKIE), 242 to 282 (THSR…STEI), 333 to 373 (LTDH…GKGD), 382 to 422 (EHES…EWKA), and 490 to 521 (DGIT…CLWM).

This sequence belongs to the WD repeat DDB2/WDR76 family.

DNA-binding protein that binds to both single- and double-stranded DNA. Binds preferentially to UV-damaged DNA. May be involved in DNA-metabolic processes. The sequence is that of DNA damage-binding protein cmr1 from Neurospora crassa (strain ATCC 24698 / 74-OR23-1A / CBS 708.71 / DSM 1257 / FGSC 987).